The sequence spans 224 residues: Octanoyltransferase (224 aa).

The region spanning 29–224 (EATPDALWIC…GQKLATYLAP (196 aa)) is the BPL/LPL catalytic domain. Substrate contacts are provided by residues 68–75 (RGGQVTFH), 157–159 (ALG), and 170–172 (GVA). The active-site Acyl-thioester intermediate is the cysteine 188.

This sequence belongs to the LipB family.

It localises to the cytoplasm. The catalysed reaction is octanoyl-[ACP] + L-lysyl-[protein] = N(6)-octanoyl-L-lysyl-[protein] + holo-[ACP] + H(+). It participates in protein modification; protein lipoylation via endogenous pathway; protein N(6)-(lipoyl)lysine from octanoyl-[acyl-carrier-protein]: step 1/2. Functionally, catalyzes the transfer of endogenously produced octanoic acid from octanoyl-acyl-carrier-protein onto the lipoyl domains of lipoate-dependent enzymes. Lipoyl-ACP can also act as a substrate although octanoyl-ACP is likely to be the physiological substrate. This chain is Octanoyltransferase, found in Polaromonas naphthalenivorans (strain CJ2).